The sequence spans 795 residues: Multiple C2 domain and transmembrane region protein 12 (795 aa).

3 consecutive C2 domains span residues Arg-24–Tyr-142, Val-180–Ala-298, and Tyr-341–Tyr-463. Residues Asn-57, Asp-109, and Asn-113 each contribute to the Ca(2+) site. 4 helical membrane-spanning segments follow: residues Cys-590 to Ile-610, Trp-612 to Leu-632, Phe-730 to Trp-750, and Leu-752 to Phe-772.

It belongs to the MCTP family. Ca(2+) serves as cofactor. Expressed in root vascular tissues and meristems. Observed in flowers.

The protein resides in the endoplasmic reticulum membrane. In terms of biological role, may function as a signaling molecule by regulating the trafficking of other regulators. This Arabidopsis thaliana (Mouse-ear cress) protein is Multiple C2 domain and transmembrane region protein 12.